Reading from the N-terminus, the 297-residue chain is Small ribosomal subunit biogenesis GTPase RsgA (297 aa).

Residues 65–223 form the CP-type G domain; that stretch reads RNELVRPPVA…VADTPGFSAI (159 aa). GTP contacts are provided by residues 114-117 and 166-174; these read TKVD and GQSGAGKST. Zn(2+)-binding residues include cysteine 247, cysteine 252, histidine 254, and cysteine 260.

Belongs to the TRAFAC class YlqF/YawG GTPase family. RsgA subfamily. Monomer. Associates with 30S ribosomal subunit, binds 16S rRNA. Zn(2+) is required as a cofactor.

The protein localises to the cytoplasm. Functionally, one of several proteins that assist in the late maturation steps of the functional core of the 30S ribosomal subunit. Helps release RbfA from mature subunits. May play a role in the assembly of ribosomal proteins into the subunit. Circularly permuted GTPase that catalyzes slow GTP hydrolysis, GTPase activity is stimulated by the 30S ribosomal subunit. The protein is Small ribosomal subunit biogenesis GTPase RsgA of Enterococcus faecalis (strain ATCC 700802 / V583).